Reading from the N-terminus, the 444-residue chain is Enolase (444 aa).

Residues H163 and E172 each contribute to the substrate site. The active-site Proton donor is the E215. Mg(2+)-binding residues include D250, E300, and D327. The substrate site is built by E300 and D327. The active-site Proton acceptor is the K352. Residues 379–382 (SHRS) and K403 each bind substrate.

It belongs to the enolase family. Homodimer. The cofactor is Mg(2+).

Its subcellular location is the cytoplasm. The catalysed reaction is (2R)-2-phosphoglycerate = phosphoenolpyruvate + H2O. Its pathway is carbohydrate degradation; glycolysis; pyruvate from D-glyceraldehyde 3-phosphate: step 4/5. The polypeptide is Enolase (PGH1) (Solanum lycopersicum (Tomato)).